We begin with the raw amino-acid sequence, 350 residues long: MSIEVRNLSKRFGQFRALNDVSLHIETGELVALLGPSGCGKTTLLRIIAGLESADNGSVLFAGEDATSVDVRQRQVGFVFQHYALFKHMTVFENVAFGLRVKHRSQRPSEDQIQRKVHDLLGLVQLDWLADRYPAQLSGGQRQRIALARALAVEPRVLLLDEPFGALDAKVRKELRRWLRRLHDELNVASVFVTHDQEEALEVADRVVLMNAGRIEQVGTPREVWEGPATPFVYGFLGDVNQLQGVASRGVWEGAGLSLPAPELAQAENQRATAYVRPHEFLYTPAAQEIIAKNYYRPIDKTVAAKYESKFPKVKLVTIDDKIFGGWRKAQKDHFSDGGTFDQIYQPQKK.

In terms of domain architecture, ABC transporter spans 3 to 237 (IEVRNLSKRF…PATPFVYGFL (235 aa)). 35 to 42 (GPSGCGKT) contacts ATP.

Belongs to the ABC transporter superfamily. Sulfate/tungstate importer (TC 3.A.1.6) family.

It localises to the mitochondrion. It carries out the reaction sulfate(out) + ATP + H2O = sulfate(in) + ADP + phosphate + H(+). The enzyme catalyses thiosulfate(out) + ATP + H2O = thiosulfate(in) + ADP + phosphate + H(+). Its function is as follows. Part of the ABC transporter complex involved in sulfate/thiosulfate import. Responsible for energy coupling to the transport system. This is Sulfate/thiosulfate import ATP-binding protein cysA (CYSA) from Cucumis sativus (Cucumber).